The chain runs to 535 residues: CTP synthase (535 aa).

Residues 1-267 (MTKYIFVTGG…DQIVCDHLKL (267 aa)) are amidoligase domain. S13 is a CTP binding site. Residue S13 participates in UTP binding. Position 14-19 (14-19 (SLGKGI)) interacts with ATP. Y54 contacts L-glutamine. D71 is an ATP binding site. 2 residues coordinate Mg(2+): D71 and E141. Residues 148–150 (DIE), 188–193 (KTKPTQ), and K224 contribute to the CTP site. UTP is bound by residues 188–193 (KTKPTQ) and K224. 240-242 (RDA) contributes to the ATP binding site. Residues 292–534 (KIALVGKYVE…VRASITNKES (243 aa)) form the Glutamine amidotransferase type-1 domain. G354 serves as a coordination point for L-glutamine. Residue C381 is the Nucleophile; for glutamine hydrolysis of the active site. L-glutamine contacts are provided by residues 382-385 (LGMQ), E405, and R462. Catalysis depends on residues H507 and E509.

Belongs to the CTP synthase family. Homotetramer.

The enzyme catalyses UTP + L-glutamine + ATP + H2O = CTP + L-glutamate + ADP + phosphate + 2 H(+). It catalyses the reaction L-glutamine + H2O = L-glutamate + NH4(+). It carries out the reaction UTP + NH4(+) + ATP = CTP + ADP + phosphate + 2 H(+). Its pathway is pyrimidine metabolism; CTP biosynthesis via de novo pathway; CTP from UDP: step 2/2. Its activity is regulated as follows. Allosterically activated by GTP, when glutamine is the substrate; GTP has no effect on the reaction when ammonia is the substrate. The allosteric effector GTP functions by stabilizing the protein conformation that binds the tetrahedral intermediate(s) formed during glutamine hydrolysis. Inhibited by the product CTP, via allosteric rather than competitive inhibition. In terms of biological role, catalyzes the ATP-dependent amination of UTP to CTP with either L-glutamine or ammonia as the source of nitrogen. Regulates intracellular CTP levels through interactions with the four ribonucleotide triphosphates. This is CTP synthase from Bacillus cereus (strain ATCC 14579 / DSM 31 / CCUG 7414 / JCM 2152 / NBRC 15305 / NCIMB 9373 / NCTC 2599 / NRRL B-3711).